Reading from the N-terminus, the 338-residue chain is Fructose-1,6-bisphosphatase 1 (338 aa).

Residue threonine 2 is modified to N-acetylthreonine. Residues 18–22 (VMEEG) and 28–32 (TGEMT) contribute to the AMP site. Positions 69 and 98 each coordinate Mg(2+). 113 to 114 (KY) is a binding site for AMP. Residues aspartate 119, leucine 121, and aspartate 122 each coordinate Mg(2+). Position 122–125 (122–125 (DGSS)) interacts with substrate. Lysine 141 provides a ligand contact to AMP. An N6-succinyllysine modification is found at lysine 151. Serine 208 bears the Phosphoserine mark. Residues 213 to 216 (NEGY), 244 to 249 (RYVGSM), tyrosine 265, and 275 to 277 (KLR) contribute to the substrate site. 3 positions are modified to phosphotyrosine: tyrosine 216, tyrosine 245, and tyrosine 265. Mg(2+) is bound at residue glutamate 281.

Belongs to the FBPase class 1 family. As to quaternary structure, homotetramer. It depends on Mg(2+) as a cofactor.

It catalyses the reaction beta-D-fructose 1,6-bisphosphate + H2O = beta-D-fructose 6-phosphate + phosphate. It functions in the pathway carbohydrate biosynthesis; gluconeogenesis. Its activity is regulated as follows. Subject to complex allosteric regulation. The enzyme can assume an active R-state, or an inactive T-state. Intermediate conformations may exist. AMP acts as an allosteric inhibitor. AMP binding affects the turnover of bound substrate and not the affinity for substrate. Fructose 2,6-bisphosphate acts as a competitive inhibitor. Fructose 2,6-bisphosphate and AMP have synergistic effects. Catalyzes the hydrolysis of fructose 1,6-bisphosphate to fructose 6-phosphate in the presence of divalent cations, acting as a rate-limiting enzyme in gluconeogenesis. Plays a role in regulating glucose sensing and insulin secretion of pancreatic beta-cells. Appears to modulate glycerol gluconeogenesis in liver. Important regulator of appetite and adiposity; increased expression of the protein in liver after nutrient excess increases circulating satiety hormones and reduces appetite-stimulating neuropeptides and thus seems to provide a feedback mechanism to limit weight gain. In Bos taurus (Bovine), this protein is Fructose-1,6-bisphosphatase 1 (FBP1).